The primary structure comprises 238 residues: Phosphoribosylaminoimidazole-succinocarboxamide synthase (238 aa).

The protein belongs to the SAICAR synthetase family.

The enzyme catalyses 5-amino-1-(5-phospho-D-ribosyl)imidazole-4-carboxylate + L-aspartate + ATP = (2S)-2-[5-amino-1-(5-phospho-beta-D-ribosyl)imidazole-4-carboxamido]succinate + ADP + phosphate + 2 H(+). Its pathway is purine metabolism; IMP biosynthesis via de novo pathway; 5-amino-1-(5-phospho-D-ribosyl)imidazole-4-carboxamide from 5-amino-1-(5-phospho-D-ribosyl)imidazole-4-carboxylate: step 1/2. The sequence is that of Phosphoribosylaminoimidazole-succinocarboxamide synthase from Desulfitobacterium hafniense (strain DSM 10664 / DCB-2).